The sequence spans 162 residues: MVSVETVGSIFIKALKLIINLVIIFLYRWGDGGEFLGIGGTWNLNEEKSADAEIVASGVMVGFLIYTGCHTIAFAFGTTKHKGELCDTIMNVVGCIMWIAVGGVALHYWKGYMSDEGFLYVNSERQVGIAMGSLCVIEGALYLLDTVLACIHYSKGDTDYTQ.

The Cytoplasmic segment spans residues 2-6 (VSVET). A helical transmembrane segment spans residues 7-27 (VGSIFIKALKLIINLVIIFLY). Residues 28 to 53 (RWGDGGEFLGIGGTWNLNEEKSADAE) lie on the Extracellular side of the membrane. Residues 54 to 74 (IVASGVMVGFLIYTGCHTIAF) traverse the membrane as a helical segment. The Cytoplasmic segment spans residues 75–88 (AFGTTKHKGELCDT). Residues 89-109 (IMNVVGCIMWIAVGGVALHYW) form a helical membrane-spanning segment. Topologically, residues 110–128 (KGYMSDEGFLYVNSERQVG) are extracellular. Residues 129–149 (IAMGSLCVIEGALYLLDTVLA) traverse the membrane as a helical segment. Residues 150–162 (CIHYSKGDTDYTQ) lie on the Cytoplasmic side of the membrane.

In terms of assembly, forms a complex with Tsp2A and mesh. Interacts with mesh; the interaction may be necessary for the localization of both proteins to the cell apicolateral region.

The protein localises to the apicolateral cell membrane. The protein resides in the cell junction. It localises to the septate junction. In terms of biological role, required for assembly of smooth septate junctions (sSJs), together with mesh and Tsp2A. May be important for barrier function of the midgut epithelium. The protein is Protein snakeskin of Drosophila melanogaster (Fruit fly).